We begin with the raw amino-acid sequence, 98 residues long: YcgL domain-containing protein CJA_2437 (98 aa).

The YcgL domain maps to 3 to 87 (IIAEIYRSPK…RDLVDAEAKR (85 aa)).

This is YcgL domain-containing protein CJA_2437 from Cellvibrio japonicus (strain Ueda107) (Pseudomonas fluorescens subsp. cellulosa).